Here is a 255-residue protein sequence, read N- to C-terminus: tRNA (guanine-N(1)-)-methyltransferase (255 aa).

S-adenosyl-L-methionine is bound by residues Gly-113 and 133-138 (IGDYVL).

The protein belongs to the RNA methyltransferase TrmD family. Homodimer.

It is found in the cytoplasm. The enzyme catalyses guanosine(37) in tRNA + S-adenosyl-L-methionine = N(1)-methylguanosine(37) in tRNA + S-adenosyl-L-homocysteine + H(+). Specifically methylates guanosine-37 in various tRNAs. This chain is tRNA (guanine-N(1)-)-methyltransferase, found in Escherichia fergusonii (strain ATCC 35469 / DSM 13698 / CCUG 18766 / IAM 14443 / JCM 21226 / LMG 7866 / NBRC 102419 / NCTC 12128 / CDC 0568-73).